Reading from the N-terminus, the 400-residue chain is Argininosuccinate synthase (400 aa).

10–18 provides a ligand contact to ATP; sequence AYSGGVDTS. Residue tyrosine 89 coordinates L-citrulline. Glycine 119 is an ATP binding site. L-aspartate contacts are provided by threonine 121, asparagine 125, and aspartate 126. Position 125 (asparagine 125) interacts with L-citrulline. L-citrulline contacts are provided by arginine 129, serine 177, serine 186, glutamate 262, and tyrosine 274.

The protein belongs to the argininosuccinate synthase family. Type 1 subfamily. In terms of assembly, homotetramer.

It localises to the cytoplasm. The enzyme catalyses L-citrulline + L-aspartate + ATP = 2-(N(omega)-L-arginino)succinate + AMP + diphosphate + H(+). Its pathway is amino-acid biosynthesis; L-arginine biosynthesis; L-arginine from L-ornithine and carbamoyl phosphate: step 2/3. This Synechococcus sp. (strain JA-2-3B'a(2-13)) (Cyanobacteria bacterium Yellowstone B-Prime) protein is Argininosuccinate synthase.